The primary structure comprises 739 residues: Eukaryotic translation initiation factor 3 subunit B (739 aa).

The sufficient for interaction with HCR1 and TIF32 stretch occupies residues 1 to 98 (MSINEEDYLQ…LFIQFKSTES (98 aa)). A sufficient for interaction with PIC8 region spans residues 1–224 (MSINEEDYLQ…GIQSWGGANF (224 aa)). Positions 37–124 (NYIIVDGAPI…HRLLVNKLSD (88 aa)) constitute an RRM domain. 7 WD repeats span residues 190–229 (PRKG…SIKR), 231–293 (FHQQ…RTFA), 301–339 (QKEM…QLLD), 343–385 (VKVD…QTAR), 453–502 (ELKD…KGGV), 537–579 (IENK…ETNK), and 592–630 (DKFS…YEFT).

This sequence belongs to the eIF-3 subunit B family. Component of the eukaryotic translation initiation factor 3 (eIF-3) complex.

Its subcellular location is the cytoplasm. RNA-binding component of the eukaryotic translation initiation factor 3 (eIF-3) complex, which is involved in protein synthesis of a specialized repertoire of mRNAs and, together with other initiation factors, stimulates binding of mRNA and methionyl-tRNAi to the 40S ribosome. The eIF-3 complex specifically targets and initiates translation of a subset of mRNAs involved in cell proliferation. The sequence is that of Eukaryotic translation initiation factor 3 subunit B from Candida albicans (strain SC5314 / ATCC MYA-2876) (Yeast).